A 266-amino-acid polypeptide reads, in one-letter code: NADP-dependent mannitol dehydrogenase (266 aa).

Residues N107 and K140 each coordinate NADP(+). The active-site Proton donor is the S159. NADP(+) contacts are provided by Y174, K178, I206, and T208. Catalysis depends on Y174, which acts as the Proton acceptor. K178 acts as the Lowers pKa of active site Tyr in catalysis.

It belongs to the short-chain dehydrogenases/reductases (SDR) family. As to quaternary structure, homotetramer.

It catalyses the reaction D-mannitol + NADP(+) = D-fructose + NADPH + H(+). In terms of biological role, catalyzes the interconversion between D-mannitol and D-fructose. Plays a key role in liamocins biosynthesis by providing the mannitol moity that is linked to 3,5-dihydroxydecanoic acid (provided by the HR-PKS PKS1) via ester bond formation catalyzed by the esterase EST1. The polypeptide is NADP-dependent mannitol dehydrogenase (Aureobasidium melanogenum (Aureobasidium pullulans var. melanogenum)).